We begin with the raw amino-acid sequence, 38 residues long: Photosystem I reaction center subunit IX (38 aa).

Residues 4 to 24 (FLTTAPVFSAIWFTLTAGIMI) traverse the membrane as a helical segment.

The protein belongs to the PsaJ family.

Its subcellular location is the plastid. The protein localises to the organellar chromatophore thylakoid membrane. Functionally, may help in the organization of the PsaE and PsaF subunits. The sequence is that of Photosystem I reaction center subunit IX from Paulinella chromatophora.